The following is a 229-amino-acid chain: Potassium/proton antiporter CemA (229 aa).

4 helical membrane-spanning segments follow: residues 7 to 27 (FTPL…SLSL), 114 to 134 (IICF…LLIL), 154 to 174 (ILLL…ELMI), and 189 to 209 (IISG…KYWI).

It belongs to the CemA family.

The protein resides in the plastid. It is found in the chloroplast inner membrane. It carries out the reaction K(+)(in) + H(+)(out) = K(+)(out) + H(+)(in). Its function is as follows. Contributes to K(+)/H(+) antiport activity by supporting proton efflux to control proton extrusion and homeostasis in chloroplasts in a light-dependent manner to modulate photosynthesis. Prevents excessive induction of non-photochemical quenching (NPQ) under continuous-light conditions. Indirectly promotes efficient inorganic carbon uptake into chloroplasts. This chain is Potassium/proton antiporter CemA, found in Vitis vinifera (Grape).